We begin with the raw amino-acid sequence, 666 residues long: Peptidase S41 family protein phomP1' (666 aa).

Positions 1 to 27 (MSSFLVQTAVVRLFLLGVVFWFPFALS) are cleaved as a signal peptide. 3 N-linked (GlcNAc...) asparagine glycosylation sites follow: asparagine 70, asparagine 214, and asparagine 234. Residues 303–504 (DVAVLQITSF…LLQAQGVRTV (202 aa)) are peptidase S41 domain. Residues asparagine 555 and asparagine 612 are each glycosylated (N-linked (GlcNAc...) asparagine).

The protein belongs to the peptidase S41A family.

It participates in mycotoxin biosynthesis. Functionally, peptidase S41 family protein; part of the gene cluster that mediates the biosynthesis of the phomopsins, a group of hexapeptide mycotoxins which infects lupins and causes lupinosis disease in livestock. Within the pathway, phomP1 and phomP1' are probably involved in the processing of the phomA and phomA' precursors. The pathway starts with the processing of the precursor phomA by several endopeptidases including kexin proteases as well as the cluster-specific S41 family peptidase phomP1 and the oligopeptidase phomG to produce 10 identical copies of the hexapeptide Tyr-Val-Ile-Pro-Ile-Asp. After being excised from the precursor peptide, the core peptides are cyclized and modified post-translationally by enzymes encoded within the gene cluster. The timing and order of proteolysis of the phomA precursor and PTMs are still unknown. Two tyrosinase-like enzymes, phomQ1 and phomQ2, catalyze the chlorination and hydroxylation of Tyr, respectively. PhomYb, is proposed to be involved in the construction of the macrocyclic structure. The other 4 ustYa family proteins may be involved in PTMs that generate the unique structure of phomopsin A. PhomYa is required for the hydroxylation of C-beta of Tyr. PhomYc, phomYd, and phomYe are responsible for the biosynthesis of 2,3-dehydroisoleucine (dIle), 2,3-dehydroaspartic acid (dAsp), and 3,4-dehydroproline (dPro), respectively. While dIle formation by phomYc is indispensable for the installation of dAsp by phomYd, the order of the other PTMs have not been elucidated yet. Most of the biosynthetic enzymes likely have broad substrate specificity, and thus, there might be a metabolic grid from a precursor to phomopsin A. The enzyme(s) responsible for the biosynthesis of 3,4-dehydrovaline (dVal) have also not been identified yet. Finally, phomM acts as an S-adenosylmethionine-dependent alpha-N-methyltransferase that catalyzes two successive N-methylation reactions, converting N-desmethyl-phomopsin A to phomopsin A and phomopsin A further to an N,N-dimethylated congener called phomopsin E. In Diaporthe leptostromiformis (Lupinosis disease fungus), this protein is Peptidase S41 family protein phomP1'.